Here is a 417-residue protein sequence, read N- to C-terminus: WAT1-related protein At3g02690, chloroplastic (417 aa).

A chloroplast-targeting transit peptide spans 1–68; the sequence is MEWPWSAIAA…RRINGDSVVR (68 aa). Residues 67-92 form a disordered region; it reads VRRSTTSNNSTEETESSSSSSSVDCV. A compositionally biased stretch (low complexity) spans 68–89; sequence RRSTTSNNSTEETESSSSSSSV. Helical transmembrane passes span 122-142, 152-172, 183-203, 213-233, 237-257, 269-289, 301-321, 339-359, 369-389, and 392-412; these read FLEW…MVAM, FFVA…FAVY, AWFS…GFLA, LGSV…SFLF, IGIV…LLEV, LWGS…IGTV, IMAT…ISVI, VIAL…VYFY, LSSL…LYLN, and FSSL…LVNF. 2 EamA domains span residues 133–255 and 283–411; these read FFWG…LLLL and SMAI…YLVN.

It belongs to the drug/metabolite transporter (DMT) superfamily. Plant drug/metabolite exporter (P-DME) (TC 2.A.7.4) family.

The protein localises to the plastid. It localises to the chloroplast membrane. The sequence is that of WAT1-related protein At3g02690, chloroplastic from Arabidopsis thaliana (Mouse-ear cress).